The primary structure comprises 575 residues: Cyclic nucleotide-gated channel alpha-4 (575 aa).

Residues 1-38 lie on the Cytoplasmic side of the membrane; the sequence is MSQDSKVKTTESTPPAPTKARKWLPVLDPSGDYYYWWL. Residues 39 to 60 traverse the membrane as a helical segment; sequence NTMVFPIMYNLIIVVCRACFPD. The Extracellular segment spans residues 61–70; sequence LQHSYLVAWF. A helical membrane pass occupies residues 71–91; sequence VLDYTSDLLYLLDIGVRFHTG. The Cytoplasmic segment spans residues 92–116; that stretch reads FLEQGILVVDKSMIASRYVRTWSFL. The chain crosses the membrane as a helical span at residues 117-135; the sequence is LDLASLVPTDAAYVQLGPH. At 136-140 the chain is on the extracellular side; sequence IPTLR. Residues 141–159 form a helical membrane-spanning segment; it reads LNRFLRVPRLFEAFDRTET. The Cytoplasmic segment spans residues 160-166; that stretch reads RTAYPNA. The ion conduction pathway stretch occupies residues 164–272; sequence PNAFRIAKLM…GSMSSVIYNM (109 aa). Residues 167 to 190 form a helical membrane-spanning segment; that stretch reads FRIAKLMIYIFVVIHWNSCLYFAL. Residues 191 to 213 lie on the Extracellular side of the membrane; sequence SRYLGFGRDAWVYPDPAQPGFER. 2 helical membrane-spanning segments follow: residues 214–248 and 249–273; these read LRRQYLYSFYFSTLILTTVGDTPLPAREEEYLFMV and GDFLLAVMGFATIMGSMSSVIYNMN. A selectivity filter region spans residues 231–234; sequence TVGD. Residues 274-350 form a C-linker region; the sequence is TADAAFYPDH…STLSRVQIFQ (77 aa). Over 274-575 the chain is Cytoplasmic; sequence TADAAFYPDH…AGQEGPSGLE (302 aa). The IQ-type signature appears at 292–302; it reads LQHVNRRLERR. Residue 348-471 participates in a nucleoside 3',5'-cyclic phosphate binding; the sequence is IFQNCEASLL…AVMEEKGREI (124 aa). The cyclic nucleotide-binding domain stretch occupies residues 354-474; sequence ASLLEELVLK…EEKGREILLK (121 aa). Positions 414, 417, 430, and 431 each coordinate 3',5'-cyclic GMP. 2 residues coordinate 3',5'-cyclic AMP: arginine 430 and threonine 431. A coiled-coil region spans residues 493–547; it reads TESRLKGLDQQLDDLQTKFARLLAELESSALKIAYRIERLEWQTREWPMPDDMGE. Residues 536 to 575 form a disordered region; it reads TREWPMPDDMGEADDEAEPGEGTSKDGEEKAGQEGPSGLE. Acidic residues predominate over residues 544-554; the sequence is DMGEADDEAEP. Residues 558-567 show a composition bias toward basic and acidic residues; that stretch reads TSKDGEEKAG.

The protein belongs to the cyclic nucleotide-gated cation channel (TC 1.A.1.5) family. CNGA4 subfamily. The olfactory cyclic nucleotide-gated channel is an heterotetramer composed of CNGA2, CNGA4 and CNGB1b subunits with 2:1:1 stoichiometry. Expressed in the olfactory epithelium.

It localises to the cell projection. The protein localises to the cilium membrane. It carries out the reaction Ca(2+)(in) = Ca(2+)(out). The catalysed reaction is Na(+)(in) = Na(+)(out). It catalyses the reaction K(+)(in) = K(+)(out). The enzyme catalyses NH4(+)(in) = NH4(+)(out). It carries out the reaction Rb(+)(in) = Rb(+)(out). The catalysed reaction is Li(+)(in) = Li(+)(out). It catalyses the reaction Cs(+)(in) = Cs(+)(out). Its activity is regulated as follows. Ca(2+)-calmodulin exerts its inhibitory effect in cAMP sensitivity by binding to IQ-like motif of CNGA4 and preferably binds to the channel in the closed state. Inhibition by PIP3 of the CNG channel probably occurs via CGNA2 binding. In terms of biological role, pore-forming subunit of the olfactory cyclic nucleotide-gated channel. Operates in the cilia of olfactory sensory neurons where chemical stimulation of the odorant is converted to an electrical signal. Mediates odorant-induced cAMP-dependent Ca(2+) influx triggering neuron depolarization. The rise of intracellular Ca(2+) levels potentiates the olfactory response by activating Ca(2+)-dependent Cl(-) channels, but it also serves as a negative feedback signal to desensitize the channel for rapid adaptation to odorants. Conducts cGMP- and cAMP-gated ion currents, with permeability for monovalent and divalent cations. Conducts cAMP- and cGMP-gated ion currents, with permeability for monovalent and divalent cations. May conduct nitric oxide-gated Ca(2+) currents relevant to neurons of vomeronasal organ, a system involved in the perception of pheromones. The protein is Cyclic nucleotide-gated channel alpha-4 of Mus musculus (Mouse).